The sequence spans 947 residues: Mitogen-activated protein kinase kinase kinase 14 (947 aa).

Disordered stretches follow at residues 1–37 (MAVM…KKQS) and 135–171 (KGKR…TPEQ). Basic residues predominate over residues 135-151 (KGKRRSKARKKRKKKSS). Residues 400–655 (ATHQLRLGRG…ELGGKVNRAL (256 aa)) form the Protein kinase domain. The interaction with ZFP91 stretch occupies residues 401–653 (THQLRLGRGS…AAELGGKVNR (253 aa)). ATP contacts are provided by residues 406–414 (LGRGSFGEV) and lysine 429. Aspartate 515 serves as the catalytic Proton acceptor. Threonine 559 carries the phosphothreonine modification. Disordered regions lie at residues 662-766 (KSPW…ATVP) and 805-830 (LSDD…GVHS). Over residues 665–674 (WRGEYKEPRH) the composition is skewed to basic and acidic residues. Over residues 713–727 (LQPPLPPEPPEPNKS) the composition is skewed to pro residues. Residues 741–752 (EPLPLSSLEPAP) show a composition bias toward low complexity. A compositionally biased stretch (polar residues) spans 814–829 (SKASQSSRDTLSSGVH).

It belongs to the protein kinase superfamily. STE Ser/Thr protein kinase family. MAP kinase kinase kinase subfamily. In terms of assembly, interacts with TRAF2, TRAF5, TRAF6, IKKA and NFKB2/P100. Interacts with TRAF3 and PELI3. Interacts with NIBP; the interaction is direct. Interacts with ARRB1 and ARRB2. Interacts with GRB10. Interacts with ZFP91. Interacts with NLRP12; this interaction promotes proteasomal degradation of MAP3K14. Directly interacts with DDX3X. Interacts (via C-terminus and kinase domain) with PPPC3A (via N-terminus) and PPP3CB. In terms of processing, autophosphorylated. Phosphorylation at Thr-559 is required to activate its kinase activity and 'Lys-63'-linked polyubiquitination. Phosphorylated by CHUK/IKKA leading to MAP3K14 destabilization. Post-translationally, ubiquitinated. Undergoes both 'Lys-48'- and 'Lys-63'-linked polyubiquitination. 'Lys-48'-linked polyubiquitination leads to its degradation by the proteasome, while 'Lys-63'-linked polyubiquitination stabilizes and activates it. In terms of tissue distribution, weakly expressed in testis, small intestine, spleen, thymus, peripheral blood leukocytes, prostate, ovary and colon.

The protein resides in the cytoplasm. The catalysed reaction is L-seryl-[protein] + ATP = O-phospho-L-seryl-[protein] + ADP + H(+). The enzyme catalyses L-threonyl-[protein] + ATP = O-phospho-L-threonyl-[protein] + ADP + H(+). Lymphotoxin beta-activated kinase which seems to be exclusively involved in the activation of NF-kappa-B and its transcriptional activity. Phosphorylates CHUK/IKKA, thereby promoting proteolytic processing of NFKB2/P100, which leads to NF-kappa-B activation via the non-canonical pathway. Has an essential role in the non-canonical NF-kappa-B signaling that regulates genes encoding molecules involved in B-cell survival, lymphoid organogenesis, and immune response. Could act in a receptor-selective manner. The chain is Mitogen-activated protein kinase kinase kinase 14 from Homo sapiens (Human).